Here is a 226-residue protein sequence, read N- to C-terminus: Leucyl/phenylalanyl-tRNA--protein transferase (226 aa).

Belongs to the L/F-transferase family.

The protein localises to the cytoplasm. The enzyme catalyses N-terminal L-lysyl-[protein] + L-leucyl-tRNA(Leu) = N-terminal L-leucyl-L-lysyl-[protein] + tRNA(Leu) + H(+). It carries out the reaction N-terminal L-arginyl-[protein] + L-leucyl-tRNA(Leu) = N-terminal L-leucyl-L-arginyl-[protein] + tRNA(Leu) + H(+). It catalyses the reaction L-phenylalanyl-tRNA(Phe) + an N-terminal L-alpha-aminoacyl-[protein] = an N-terminal L-phenylalanyl-L-alpha-aminoacyl-[protein] + tRNA(Phe). Functions in the N-end rule pathway of protein degradation where it conjugates Leu, Phe and, less efficiently, Met from aminoacyl-tRNAs to the N-termini of proteins containing an N-terminal arginine or lysine. This is Leucyl/phenylalanyl-tRNA--protein transferase from Pseudomonas fluorescens (strain ATCC BAA-477 / NRRL B-23932 / Pf-5).